The following is a 293-amino-acid chain: MSLFRRVGIIARLDKPQILDTVKKLMEYLQEKDIAPVLEDQLATMMPGVKVASSALKELGDHCDMVMVVGGDGSFLGAARAICNYDIPVLGINRGTLGFLTDISPHNLQEELDPIFRGEYHEEKRFMIEAKIKRQNRPSGEGIALNDLVLHPGKSARMIRFDLFIDDQFVMNQKSDGLIVATPTGSTAYALSAGGPIMLPKLDALVLVPMHPHTLSNRPIVIDANARIRIVVCESNLTYPSVSCDGQLNITAAPGDEIHITKKAGGIRLIHPKNHDFYNVCRDKLGWQSSYRP.

Aspartate 72 serves as the catalytic Proton acceptor. Residues 72-73, 146-147, arginine 157, lysine 174, aspartate 176, 187-192, and glutamine 247 contribute to the NAD(+) site; these read DG, ND, and TAYALS.

This sequence belongs to the NAD kinase family. It depends on a divalent metal cation as a cofactor.

It localises to the cytoplasm. It catalyses the reaction NAD(+) + ATP = ADP + NADP(+) + H(+). In terms of biological role, involved in the regulation of the intracellular balance of NAD and NADP, and is a key enzyme in the biosynthesis of NADP. Catalyzes specifically the phosphorylation on 2'-hydroxyl of the adenosine moiety of NAD to yield NADP. In Marinomonas sp. (strain MWYL1), this protein is NAD kinase.